The primary structure comprises 745 residues: Fatty acid oxidation complex subunit alpha (745 aa).

The interval 47-209 (VNTLKAKFAE…KMGLVDDVVP (163 aa)) is enoyl-CoA hydratase. The 3-hydroxyacyl-CoA dehydrogenase stretch occupies residues 325–745 (RAIHRVGVLG…LDEAAITAHN (421 aa)).

The protein in the N-terminal section; belongs to the enoyl-CoA hydratase/isomerase family. This sequence in the central section; belongs to the 3-hydroxyacyl-CoA dehydrogenase family. In terms of assembly, heterotetramer of two alpha chains (FadJ) and two beta chains (FadI).

It is found in the cytoplasm. It carries out the reaction a (3S)-3-hydroxyacyl-CoA = a (2E)-enoyl-CoA + H2O. The enzyme catalyses a 4-saturated-(3S)-3-hydroxyacyl-CoA = a (3E)-enoyl-CoA + H2O. The catalysed reaction is a (3S)-3-hydroxyacyl-CoA + NAD(+) = a 3-oxoacyl-CoA + NADH + H(+). It catalyses the reaction (3S)-3-hydroxybutanoyl-CoA = (3R)-3-hydroxybutanoyl-CoA. It functions in the pathway lipid metabolism; fatty acid beta-oxidation. Catalyzes the formation of a hydroxyacyl-CoA by addition of water on enoyl-CoA. Also exhibits 3-hydroxyacyl-CoA epimerase and 3-hydroxyacyl-CoA dehydrogenase activities. This Yersinia enterocolitica serotype O:8 / biotype 1B (strain NCTC 13174 / 8081) protein is Fatty acid oxidation complex subunit alpha.